Here is a 273-residue protein sequence, read N- to C-terminus: Glutamate 5-kinase (273 aa).

Lys15 serves as a coordination point for ATP. Substrate contacts are provided by Ser55, Asp142, and Asn158. ATP is bound by residues 178–179 (SD) and 220–226 (TGGMLSK).

Belongs to the glutamate 5-kinase family.

It is found in the cytoplasm. It carries out the reaction L-glutamate + ATP = L-glutamyl 5-phosphate + ADP. It functions in the pathway amino-acid biosynthesis; L-proline biosynthesis; L-glutamate 5-semialdehyde from L-glutamate: step 1/2. Its function is as follows. Catalyzes the transfer of a phosphate group to glutamate to form L-glutamate 5-phosphate. In Streptococcus pyogenes serotype M6 (strain ATCC BAA-946 / MGAS10394), this protein is Glutamate 5-kinase.